The sequence spans 518 residues: Protein nucleotidyltransferase YdiU (518 aa).

Residues Gly-99, Gly-101, Arg-102, Lys-122, Asp-134, Gly-135, Arg-192, and Arg-199 each coordinate ATP. Catalysis depends on Asp-270, which acts as the Proton acceptor. Mg(2+) contacts are provided by Asn-271 and Asp-280. Asp-280 provides a ligand contact to ATP.

Belongs to the SELO family. Requires Mg(2+) as cofactor. The cofactor is Mn(2+).

It carries out the reaction L-seryl-[protein] + ATP = 3-O-(5'-adenylyl)-L-seryl-[protein] + diphosphate. It catalyses the reaction L-threonyl-[protein] + ATP = 3-O-(5'-adenylyl)-L-threonyl-[protein] + diphosphate. The catalysed reaction is L-tyrosyl-[protein] + ATP = O-(5'-adenylyl)-L-tyrosyl-[protein] + diphosphate. The enzyme catalyses L-histidyl-[protein] + UTP = N(tele)-(5'-uridylyl)-L-histidyl-[protein] + diphosphate. It carries out the reaction L-seryl-[protein] + UTP = O-(5'-uridylyl)-L-seryl-[protein] + diphosphate. It catalyses the reaction L-tyrosyl-[protein] + UTP = O-(5'-uridylyl)-L-tyrosyl-[protein] + diphosphate. Functionally, nucleotidyltransferase involved in the post-translational modification of proteins. It can catalyze the addition of adenosine monophosphate (AMP) or uridine monophosphate (UMP) to a protein, resulting in modifications known as AMPylation and UMPylation. The sequence is that of Protein nucleotidyltransferase YdiU from Methylobacillus flagellatus (strain ATCC 51484 / DSM 6875 / VKM B-1610 / KT).